Here is a 650-residue protein sequence, read N- to C-terminus: Acetoacetyl-coenzyme A synthetase (650 aa).

199–202 contacts CoA; the sequence is YNGK. ATP is bound by residues 392-394, D504, R519, and R530; that span reads GSP. Residue V546 participates in Mg(2+) binding. R587 lines the CoA pocket. K612 bears the N6-acetyllysine mark.

It belongs to the ATP-dependent AMP-binding enzyme family. Requires Mg(2+) as cofactor. Post-translationally, acetylated. Deacetylation by the SIR2-homolog deacetylase activates the enzyme.

It catalyses the reaction acetoacetate + ATP + CoA = acetoacetyl-CoA + AMP + diphosphate. It participates in biopolymer metabolism; poly-(R)-3-hydroxybutanoate degradation. Its function is as follows. Catalyzes the conversion of acetoacetate into acetoacetyl-CoA. Is involved in poly-3-hydroxybutyrate (PHB) degradation, which allows growth of R.meliloti on PHB cycle intermediates. The sequence is that of Acetoacetyl-coenzyme A synthetase from Rhizobium meliloti (strain 1021) (Ensifer meliloti).